The primary structure comprises 306 residues: Ribonuclease Z (306 aa).

Positions 63, 65, 67, 68, 141, 211, and 269 each coordinate Zn(2+). Aspartate 67 functions as the Proton acceptor in the catalytic mechanism.

It belongs to the RNase Z family. In terms of assembly, homodimer. Zn(2+) is required as a cofactor.

The catalysed reaction is Endonucleolytic cleavage of RNA, removing extra 3' nucleotides from tRNA precursor, generating 3' termini of tRNAs. A 3'-hydroxy group is left at the tRNA terminus and a 5'-phosphoryl group is left at the trailer molecule.. Its function is as follows. Zinc phosphodiesterase, which displays some tRNA 3'-processing endonuclease activity. Probably involved in tRNA maturation, by removing a 3'-trailer from precursor tRNA. The sequence is that of Ribonuclease Z from Staphylococcus haemolyticus (strain JCSC1435).